The sequence spans 296 residues: GTPase Era (296 aa).

The Era-type G domain maps to 3–170 (KSGFVTIIGR…IELMVKHLNE (168 aa)). The G1 stretch occupies residues 11–18 (GRPNVGKS). 11-18 (GRPNVGKS) is a GTP binding site. Residues 37-41 (QTTRN) form a G2 region. Residues 58–61 (DTPG) form a G3 region. Residues 58–62 (DTPGM) and 120–123 (NKID) each bind GTP. A G4 region spans residues 120 to 123 (NKID). The interval 149 to 151 (ISA) is G5. Residues 201-277 (LSQEVPHGIA…NMKIWVKVKK (77 aa)) form the KH type-2 domain.

The protein belongs to the TRAFAC class TrmE-Era-EngA-EngB-Septin-like GTPase superfamily. Era GTPase family. Monomer.

The protein resides in the cytoplasm. The protein localises to the cell membrane. Its function is as follows. An essential GTPase that binds both GDP and GTP, with rapid nucleotide exchange. Plays a role in 16S rRNA processing and 30S ribosomal subunit biogenesis and possibly also in cell cycle regulation and energy metabolism. The chain is GTPase Era from Clostridium acetobutylicum (strain ATCC 824 / DSM 792 / JCM 1419 / IAM 19013 / LMG 5710 / NBRC 13948 / NRRL B-527 / VKM B-1787 / 2291 / W).